The sequence spans 494 residues: 1-aminocyclopropane-1-carboxylate synthase 2 (494 aa).

Lysine 279 carries the post-translational modification N6-(pyridoxal phosphate)lysine. The interval asparagine 474–tyrosine 494 is disordered. The segment covering valine 475–proline 484 has biased composition (polar residues).

Belongs to the class-I pyridoxal-phosphate-dependent aminotransferase family. Homodimer. Requires pyridoxal 5'-phosphate as cofactor.

The catalysed reaction is S-adenosyl-L-methionine = 1-aminocyclopropane-1-carboxylate + S-methyl-5'-thioadenosine + H(+). The protein operates within alkene biosynthesis; ethylene biosynthesis via S-adenosyl-L-methionine; ethylene from S-adenosyl-L-methionine: step 1/2. Catalyzes the formation of 1-aminocyclopropane-1-carboxylate, a direct precursor of ethylene in higher plants. The chain is 1-aminocyclopropane-1-carboxylate synthase 2 (ACS2) from Cucurbita pepo (Vegetable marrow).